A 235-amino-acid polypeptide reads, in one-letter code: Small ribosomal subunit protein uS2 (235 aa).

This sequence belongs to the universal ribosomal protein uS2 family.

This Anoxybacillus flavithermus (strain DSM 21510 / WK1) protein is Small ribosomal subunit protein uS2.